Here is a 234-residue protein sequence, read N- to C-terminus: LexA repressor (234 aa).

The H-T-H motif DNA-binding region spans 41–61 (RAEIAAELGFRSPNAAEEHLK). Active-site for autocatalytic cleavage activity residues include Ser152 and Lys189.

The protein belongs to the peptidase S24 family. Homodimer.

The catalysed reaction is Hydrolysis of Ala-|-Gly bond in repressor LexA.. Functionally, represses a number of genes involved in the response to DNA damage (SOS response), including recA and lexA. In the presence of single-stranded DNA, RecA interacts with LexA causing an autocatalytic cleavage which disrupts the DNA-binding part of LexA, leading to derepression of the SOS regulon and eventually DNA repair. This chain is LexA repressor, found in Polaromonas naphthalenivorans (strain CJ2).